A 357-amino-acid chain; its full sequence is Thymidine kinase (357 aa).

G17 to T24 provides a ligand contact to ATP. Catalysis depends on E45, which acts as the Proton acceptor. ATP is bound at residue R186. Residue R192 participates in substrate binding.

It belongs to the herpesviridae thymidine kinase family. As to quaternary structure, homodimer.

The catalysed reaction is thymidine + ATP = dTMP + ADP + H(+). Functionally, catalyzes the transfer of the gamma-phospho group of ATP to thymidine to generate dTMP in the salvage pathway of pyrimidine synthesis. The dTMP serves as a substrate for DNA polymerase during viral DNA replication. Allows the virus to be reactivated and to grow in non-proliferative cells lacking a high concentration of phosphorylated nucleic acid precursors. The chain is Thymidine kinase from Bovine herpesvirus 1 (strain 6660) (BoHV-1).